The sequence spans 252 residues: ATP synthase subunit a (252 aa).

The next 6 membrane-spanning stretches (helical) occupy residues 29 to 49, 87 to 107, 117 to 137, 146 to 166, 196 to 216, and 219 to 239; these read FTNV…FLFI, FFPL…IGLF, IMIT…YGFY, LFVP…IEII, FIVS…LPLI, and VAIT…FTVL.

This sequence belongs to the ATPase A chain family. F-type ATPases have 2 components, CF(1) - the catalytic core - and CF(0) - the membrane proton channel. CF(1) has five subunits: alpha(3), beta(3), gamma(1), delta(1), epsilon(1). CF(0) has three main subunits: a(1), b(2) and c(9-12). The alpha and beta chains form an alternating ring which encloses part of the gamma chain. CF(1) is attached to CF(0) by a central stalk formed by the gamma and epsilon chains, while a peripheral stalk is formed by the delta and b chains.

The protein localises to the cell inner membrane. Its function is as follows. Key component of the proton channel; it plays a direct role in the translocation of protons across the membrane. The protein is ATP synthase subunit a of Bartonella tribocorum (strain CIP 105476 / IBS 506).